The sequence spans 549 residues: Glucose-6-phosphate isomerase (549 aa).

An N6-acetyllysine mark is found at K80, K228, and K234. Residue E355 is the Proton donor of the active site. Catalysis depends on residues H386 and K514.

Belongs to the GPI family.

It is found in the cytoplasm. The catalysed reaction is alpha-D-glucose 6-phosphate = beta-D-fructose 6-phosphate. It functions in the pathway carbohydrate biosynthesis; gluconeogenesis. It participates in carbohydrate degradation; glycolysis; D-glyceraldehyde 3-phosphate and glycerone phosphate from D-glucose: step 2/4. Catalyzes the reversible isomerization of glucose-6-phosphate to fructose-6-phosphate. The polypeptide is Glucose-6-phosphate isomerase (Escherichia fergusonii (strain ATCC 35469 / DSM 13698 / CCUG 18766 / IAM 14443 / JCM 21226 / LMG 7866 / NBRC 102419 / NCTC 12128 / CDC 0568-73)).